The following is a 66-amino-acid chain: Large ribosomal subunit protein bL31 (66 aa).

4 residues coordinate Zn(2+): C16, C18, C36, and C39.

It belongs to the bacterial ribosomal protein bL31 family. Type A subfamily. In terms of assembly, part of the 50S ribosomal subunit. The cofactor is Zn(2+).

Binds the 23S rRNA. The protein is Large ribosomal subunit protein bL31 of Desulforamulus reducens (strain ATCC BAA-1160 / DSM 100696 / MI-1) (Desulfotomaculum reducens).